A 279-amino-acid chain; its full sequence is NLP effector protein 9 (279 aa).

A signal peptide spans 1-19 (MKISNLLGVLVVFLAVVKG). The Conserved undecapeptide motif motif lies at 151-161 (AIMYAWYFPDI). N-linked (GlcNAc...) asparagine glycosylation is present at Asn176.

This sequence belongs to the Necrosis inducing protein (NPP1) family.

The protein localises to the secreted. Its function is as follows. Secreted effector that acts as a pathogen-associated molecular pattern (PAMP) recognized by the plant immune system. Seems not to induce necrosis in Nicotiana benthamiana leaves. This Plasmopara viticola (Downy mildew of grapevine) protein is NLP effector protein 9.